The sequence spans 252 residues: Urease accessory protein UreH (252 aa).

This sequence belongs to the UreD family. UreH, UreF and UreG form a complex that acts as a GTP-hydrolysis-dependent molecular chaperone, activating the urease apoprotein by helping to assemble the nickel containing metallocenter of UreC. The UreE protein probably delivers the nickel.

Its subcellular location is the cytoplasm. Functionally, required for maturation of urease via the functional incorporation of the urease nickel metallocenter. The polypeptide is Urease accessory protein UreH (Helicobacter hepaticus (strain ATCC 51449 / 3B1)).